The sequence spans 564 residues: CTP synthase (564 aa).

Residues 1–265 (MTKFVFVTGG…DEIVCHRLDI (265 aa)) form an amidoligase domain region. Ser13 is a CTP binding site. Residue Ser13 coordinates UTP. ATP-binding positions include 14-19 (SLGKGI) and Asp71. Positions 71 and 139 each coordinate Mg(2+). CTP is bound by residues 146 to 148 (DIE), 186 to 191 (KTKPTQ), and Lys222. Residues 186–191 (KTKPTQ) and Lys222 each bind UTP. One can recognise a Glutamine amidotransferase type-1 domain in the interval 290-543 (SIALVGKYVD…IQAAISFAGQ (254 aa)). Gly351 is an L-glutamine binding site. Cys378 functions as the Nucleophile; for glutamine hydrolysis in the catalytic mechanism. L-glutamine-binding positions include 379–382 (LGMQ), Glu402, and Arg469. Catalysis depends on residues His516 and Glu518.

This sequence belongs to the CTP synthase family. In terms of assembly, homotetramer.

The catalysed reaction is UTP + L-glutamine + ATP + H2O = CTP + L-glutamate + ADP + phosphate + 2 H(+). The enzyme catalyses L-glutamine + H2O = L-glutamate + NH4(+). It carries out the reaction UTP + NH4(+) + ATP = CTP + ADP + phosphate + 2 H(+). It participates in pyrimidine metabolism; CTP biosynthesis via de novo pathway; CTP from UDP: step 2/2. Allosterically activated by GTP, when glutamine is the substrate; GTP has no effect on the reaction when ammonia is the substrate. The allosteric effector GTP functions by stabilizing the protein conformation that binds the tetrahedral intermediate(s) formed during glutamine hydrolysis. Inhibited by the product CTP, via allosteric rather than competitive inhibition. In terms of biological role, catalyzes the ATP-dependent amination of UTP to CTP with either L-glutamine or ammonia as the source of nitrogen. Regulates intracellular CTP levels through interactions with the four ribonucleotide triphosphates. In Nitrosomonas europaea (strain ATCC 19718 / CIP 103999 / KCTC 2705 / NBRC 14298), this protein is CTP synthase.